Reading from the N-terminus, the 198-residue chain is MAADISESSGADCKGDPRNSAKLDADYPLRVLYCGVCSLPTEYCEYMPDVAKCRQWLEKNFPNEFAKLTVENSPKQEAGISEGQGTAGEEEEKKKQKRGGRGQIKQKKKTVPQKVTIAKIPRAKKKYVTRVCGLATFEIDLKEAQRFFAQKFSCGASVTGEDEIIIQGDFTDDIIDVIQEKWPEVDDDSIEDLGEVKK.

Residue Ala2 is modified to N-acetylalanine. Phosphoserine occurs at positions 20 and 73. The tract at residues 72 to 110 (NSPKQEAGISEGQGTAGEEEEKKKQKRGGRGQIKQKKKT) is disordered. Thr86 bears the Phosphothreonine mark. The span at 95–110 (KQKRGGRGQIKQKKKT) shows a compositional bias: basic residues. The SUI1 domain maps to 115-182 (VTIAKIPRAK…DIIDVIQEKW (68 aa)). Residue Ser189 is modified to Phosphoserine.

This sequence belongs to the DENR family. In terms of assembly, interacts with MCTS1 (via PUA domain); the complex regulates translation reinitiation. As to expression, highly expressed in heart and skeletal muscle and moderately expressed in the brain, placenta, liver and pancreas. Weakly expressed in the lung and kidney.

It is found in the cytoplasm. In terms of biological role, translation regulator forming a complex with MCTS1 to promote translation reinitiation. Translation reinitiation is the process where the small ribosomal subunit remains attached to the mRNA following termination of translation of a regulatory upstream ORF (uORF), and resume scanning on the same mRNA molecule to initiate translation of a downstream ORF, usually the main ORF (mORF). The MCTS1/DENR complex is pivotal to two linked mechanisms essential for translation reinitiation. Firstly, the dissociation of deacylated tRNAs from post-termination 40S ribosomal complexes during ribosome recycling. Secondly, the recruitment in an EIF2-independent manner of aminoacylated initiator tRNA to P site of 40S ribosomes for a new round of translation. This regulatory mechanism governs the translation of more than 150 genes which translation reinitiation is MCTS1/DENR complex-dependent. The sequence is that of Density-regulated protein (DENR) from Homo sapiens (Human).